The primary structure comprises 362 residues: Peptide chain release factor 1 (362 aa).

The residue at position 237 (glutamine 237) is an N5-methylglutamine.

Belongs to the prokaryotic/mitochondrial release factor family. In terms of processing, methylated by PrmC. Methylation increases the termination efficiency of RF1.

It localises to the cytoplasm. In terms of biological role, peptide chain release factor 1 directs the termination of translation in response to the peptide chain termination codons UAG and UAA. The chain is Peptide chain release factor 1 from Aliivibrio fischeri (strain ATCC 700601 / ES114) (Vibrio fischeri).